The sequence spans 671 residues: cGMP-dependent protein kinase 1 (671 aa).

An N-acetylserine modification is found at S2. Positions S2–T59 form a coiled coil. The required for dimerization stretch occupies residues S2 to D102. Positions A9–Q44 are leucine-zipper. The autoinhibitory domain stretch occupies residues P50 to H75. T59 bears the Phosphothreonine; by autocatalysis mark. The segment at F103–P220 is cGMP-binding, high affinity. 3',5'-cyclic AMP is bound by residues G167–A170 and R177–T178. Residues G167 to A170, R177 to T178, R282, G291 to A294, R301 to T302, and Y336 contribute to the 3',5'-cyclic GMP site. A cGMP-binding, low affinity region spans residues T221 to A341. Positions F360–F619 constitute a Protein kinase domain. Residues L366–V374 and K390 contribute to the ATP site. D484 (proton acceptor) is an active-site residue. Residue T515 is modified to Phosphothreonine. In terms of domain architecture, AGC-kinase C-terminal spans E620–F671. The disordered stretch occupies residues P635 to F671. The segment covering F652–P661 has biased composition (acidic residues).

Belongs to the protein kinase superfamily. AGC Ser/Thr protein kinase family. cGMP subfamily. In terms of assembly, isoform alpha: parallel homodimer or heterodimer and also heterotetramer. Interacts directly with PPP1R12A. Non-covalent dimer of dimer of PRKG1-PRKG1 and PPP1R12A-PPP1R12A. This interaction targets PRKG1 to stress fibers to mediate smooth muscle cell relaxation and vasodilation in responses to rises in cGMP. Isoform beta: antiparallel homodimer. Part of cGMP kinase signaling complex at least composed of ACTA2/alpha-actin, CNN1/calponin H1, PLN/phospholamban, PRKG1 and ITPR1. Interacts with IRAG1. Forms a stable complex with ITPR1, IRAG1, and isoform beta of PRKG1. Interacts with TRPC7 (via ankyrin repeat domain). Isoform alpha interacts with RGS2. Interacts with GTF2I. Post-translationally, autophosphorylation increases kinase activity. 65 kDa monomer is produced by proteolytic cleavage. High concentrations are detected in various smooth muscle: lung, rumen, trachea, aorta, uterus and stomach. Isoform alpha is expressed predominantly in heart, cerebellum and lung, whereas the beta isoform is expressed in high concentrations in trachea, aorta, stomach and uterus.

Its subcellular location is the cytoplasm. The enzyme catalyses L-seryl-[protein] + ATP = O-phospho-L-seryl-[protein] + ADP + H(+). The catalysed reaction is L-threonyl-[protein] + ATP = O-phospho-L-threonyl-[protein] + ADP + H(+). With respect to regulation, in the absence of cGMP, PRKG1 activity is suppressed by autoinhibitory contacts. Functionally, serine/threonine protein kinase that acts as a key mediator of the nitric oxide (NO)/cGMP signaling pathway. GMP binding activates PRKG1, which phosphorylates serines and threonines on many cellular proteins. Numerous protein targets for PRKG1 phosphorylation are implicated in modulating cellular calcium, but the contribution of each of these targets may vary substantially among cell types. Proteins that are phosphorylated by PRKG1 regulate platelet activation and adhesion, smooth muscle contraction, cardiac function, gene expression, feedback of the NO-signaling pathway, and other processes involved in several aspects of the CNS like axon guidance, hippocampal and cerebellar learning, circadian rhythm and nociception. Smooth muscle relaxation is mediated through lowering of intracellular free calcium, by desensitization of contractile proteins to calcium, and by decrease in the contractile state of smooth muscle or in platelet activation. Regulates intracellular calcium levels via several pathways: phosphorylates IRAG1 and inhibits IP3-induced Ca(2+) release from intracellular stores, phosphorylation of KCNMA1 (BKCa) channels decreases intracellular Ca(2+) levels, which leads to increased opening of this channel. PRKG1 phosphorylates the canonical transient receptor potential channel (TRPC) family which inactivates the associated inward calcium current. Another mode of action of NO/cGMP/PKGI signaling involves PKGI-mediated inactivation of the Ras homolog gene family member A (RhoA). Phosphorylation of RHOA by PRKG1 blocks the action of this protein in myriad processes: regulation of RHOA translocation; decreasing contraction; controlling vesicle trafficking, reduction of myosin light chain phosphorylation resulting in vasorelaxation. Activation of PRKG1 by NO signaling also alters gene expression in a number of tissues. In smooth muscle cells, increased cGMP and PRKG1 activity influence expression of smooth muscle-specific contractile proteins, levels of proteins in the NO/cGMP signaling pathway, down-regulation of the matrix proteins osteopontin and thrombospondin-1 to limit smooth muscle cell migration and phenotype. Regulates vasodilator-stimulated phosphoprotein (VASP) functions in platelets and smooth muscle. The polypeptide is cGMP-dependent protein kinase 1 (PRKG1) (Bos taurus (Bovine)).